The chain runs to 107 residues: MENTFKLLFETIGERKRNPLPESYTNYLFSKGEDKILKKIGEECTEVIIASKNNDKEELVKEMVDVLYHCFVLLAEKNISLEDIMAEVTERNGKLSRVGDRREIDTL.

It belongs to the PRA-PH family.

It is found in the cytoplasm. The catalysed reaction is 1-(5-phospho-beta-D-ribosyl)-ATP + H2O = 1-(5-phospho-beta-D-ribosyl)-5'-AMP + diphosphate + H(+). It functions in the pathway amino-acid biosynthesis; L-histidine biosynthesis; L-histidine from 5-phospho-alpha-D-ribose 1-diphosphate: step 2/9. This chain is Phosphoribosyl-ATP pyrophosphatase, found in Bacillus thuringiensis (strain Al Hakam).